Here is a 248-residue protein sequence, read N- to C-terminus: 2,3-bisphosphoglycerate-dependent phosphoglycerate mutase (248 aa).

Substrate is bound by residues 8–15 (RHGESTWN), 21–22 (TG), Arg60, 87–90 (ERHY), Lys98, 114–115 (RR), and 183–184 (GN). The active-site Tele-phosphohistidine intermediate is His9. The Proton donor/acceptor role is filled by Glu87.

This sequence belongs to the phosphoglycerate mutase family. BPG-dependent PGAM subfamily. Homodimer.

It catalyses the reaction (2R)-2-phosphoglycerate = (2R)-3-phosphoglycerate. Its pathway is carbohydrate degradation; glycolysis; pyruvate from D-glyceraldehyde 3-phosphate: step 3/5. Functionally, catalyzes the interconversion of 2-phosphoglycerate and 3-phosphoglycerate. This is 2,3-bisphosphoglycerate-dependent phosphoglycerate mutase from Paraburkholderia phymatum (strain DSM 17167 / CIP 108236 / LMG 21445 / STM815) (Burkholderia phymatum).